The chain runs to 543 residues: Chaperonin GroEL 2 (543 aa).

ATP-binding positions include 29–32 (TLGP), 86–90 (DGTTT), Gly-413, 477–479 (DAA), and Asp-493. The segment at 523–543 (PQEPEPAAGGHGHGHQHGPGF) is disordered. Over residues 534-543 (GHGHQHGPGF) the composition is skewed to basic residues.

It belongs to the chaperonin (HSP60) family. In terms of assembly, forms a cylinder of 14 subunits composed of two heptameric rings stacked back-to-back. Interacts with the co-chaperonin GroES.

It localises to the cytoplasm. The catalysed reaction is ATP + H2O + a folded polypeptide = ADP + phosphate + an unfolded polypeptide.. In terms of biological role, together with its co-chaperonin GroES, plays an essential role in assisting protein folding. The GroEL-GroES system forms a nano-cage that allows encapsulation of the non-native substrate proteins and provides a physical environment optimized to promote and accelerate protein folding. The polypeptide is Chaperonin GroEL 2 (Salinispora tropica (strain ATCC BAA-916 / DSM 44818 / JCM 13857 / NBRC 105044 / CNB-440)).